Reading from the N-terminus, the 240-residue chain is Methylthioribulose-1-phosphate dehydratase (240 aa).

Position 103 (cysteine 103) interacts with substrate. The Zn(2+) site is built by histidine 121 and histidine 123. Glutamate 144 (proton donor/acceptor) is an active-site residue. Histidine 200 provides a ligand contact to Zn(2+).

The protein belongs to the aldolase class II family. MtnB subfamily. The cofactor is Zn(2+).

Its subcellular location is the cytoplasm. The catalysed reaction is 5-(methylsulfanyl)-D-ribulose 1-phosphate = 5-methylsulfanyl-2,3-dioxopentyl phosphate + H2O. It participates in amino-acid biosynthesis; L-methionine biosynthesis via salvage pathway; L-methionine from S-methyl-5-thio-alpha-D-ribose 1-phosphate: step 2/6. In terms of biological role, catalyzes the dehydration of methylthioribulose-1-phosphate (MTRu-1-P) into 2,3-diketo-5-methylthiopentyl-1-phosphate (DK-MTP-1-P). This chain is Methylthioribulose-1-phosphate dehydratase, found in Komagataella phaffii (strain GS115 / ATCC 20864) (Yeast).